The sequence spans 509 residues: MSRYLHTLLKAIDLQVRSGLANPEIKNLSTDSREIEKGDLFLGLDGEKVDGGNFWAKAIERGACAAIISKKASLLNPPTNEDPVVILPEPVSLFMGKLAADFWGKPSSEICLIGITGTNGKTTTSFLIEFLTTSLGHPSALFGTLINRWPNHEETSKYTTTFAVPLQAKLRKAVQAGVEYGAMEVSSHALSQNRVAGCDFNGAVFTNLSRDHLDYHDSMESYFEAKASLFRSHLIEDGGPRSVINIDDKWGAKLAKELNKKCWTCSLKENSQTREKADLYISNLQIMQDGYKGKLHTPFGVENFISPLIGEFNLMNMLQAVGILVQRGLPLNDLLAALNKFPGVPGRMQLINMDGFKVKEGYPLVIVDYAHTPDGLQNALIASRSLTKRRLICVFGCGGDRDKGKRSKMGEVAAKFADYIVVTSDNPRQEDPIEIIKDIGKGITIDSEISVEPERSIAIQLAIAKAKKNDVVLIAGKGHEDYQILKDQTIYFDDREQARKALSLKTDFI.

Ser-32 provides a ligand contact to UDP-N-acetyl-alpha-D-muramoyl-L-alanyl-D-glutamate. Position 117–123 (117–123 (GTNGKTT)) interacts with ATP. UDP-N-acetyl-alpha-D-muramoyl-L-alanyl-D-glutamate-binding positions include 159–160 (TT), Ser-186, Gln-192, and Arg-194. Lys-226 carries the post-translational modification N6-carboxylysine. Meso-2,6-diaminopimelate is bound by residues Arg-401, 425–428 (DNPR), Gly-476, and Glu-480. Residues 425–428 (DNPR) carry the Meso-diaminopimelate recognition motif motif.

The protein belongs to the MurCDEF family. MurE subfamily. It depends on Mg(2+) as a cofactor. In terms of processing, carboxylation is probably crucial for Mg(2+) binding and, consequently, for the gamma-phosphate positioning of ATP.

The protein localises to the cytoplasm. The enzyme catalyses UDP-N-acetyl-alpha-D-muramoyl-L-alanyl-D-glutamate + meso-2,6-diaminopimelate + ATP = UDP-N-acetyl-alpha-D-muramoyl-L-alanyl-gamma-D-glutamyl-meso-2,6-diaminopimelate + ADP + phosphate + H(+). It functions in the pathway cell wall biogenesis; peptidoglycan biosynthesis. Its function is as follows. Catalyzes the addition of meso-diaminopimelic acid to the nucleotide precursor UDP-N-acetylmuramoyl-L-alanyl-D-glutamate (UMAG) in the biosynthesis of bacterial cell-wall peptidoglycan. In Prochlorococcus marinus (strain NATL2A), this protein is UDP-N-acetylmuramoyl-L-alanyl-D-glutamate--2,6-diaminopimelate ligase.